The sequence spans 498 residues: ATP synthase subunit beta, chloroplastic (498 aa).

172–179 (GGAGVGKT) serves as a coordination point for ATP.

It belongs to the ATPase alpha/beta chains family. As to quaternary structure, F-type ATPases have 2 components, CF(1) - the catalytic core - and CF(0) - the membrane proton channel. CF(1) has five subunits: alpha(3), beta(3), gamma(1), delta(1), epsilon(1). CF(0) has four main subunits: a(1), b(1), b'(1) and c(9-12).

It is found in the plastid. Its subcellular location is the chloroplast thylakoid membrane. The catalysed reaction is ATP + H2O + 4 H(+)(in) = ADP + phosphate + 5 H(+)(out). Produces ATP from ADP in the presence of a proton gradient across the membrane. The catalytic sites are hosted primarily by the beta subunits. This chain is ATP synthase subunit beta, chloroplastic, found in Gossypium hirsutum (Upland cotton).